The following is a 370-amino-acid chain: MKFIDEARIEVIAGDGGDGSASMRREKFVPFGGPDGGDGGRGGNVYAIADRNINTLIDYRYAKKHLARNGENGRGSDCYGKGGDDVTLRMPVGTVVTDMDTGELIADLTEHGQQVMLAQGGAGGLGNLHFKSSTNRAPRQKTDGKPGERRMLRLELKVLADVGLLGMPNAGKSTFISSVSNAKPKIADYPFTTLAPNLGVVRVGPSKSFVIADIPGLIEGAAEGAGLGHQFLRHLQRTGVLLHLVDLAPFDENVDPVAEAKAIVGELRKYDEALYEKPRWLVLNKLDMVPEDEREARVADFLARFEWDGPVFEISALTGQGCEALCYAIYDYLAEHSDAHRAAEEEDLATDVRFRDAPPADGGATPGGDA.

Positions 1–159 (MKFIDEARIE…RMLRLELKVL (159 aa)) constitute an Obg domain. Positions 160–334 (ADVGLLGMPN…LCYAIYDYLA (175 aa)) constitute an OBG-type G domain. Residues 166–173 (GMPNAGKS), 191–195 (FTTLA), 213–216 (DIPG), 284–287 (NKLD), and 315–317 (SAL) each bind GTP. Mg(2+) contacts are provided by serine 173 and threonine 193. Residues 344–370 (EEEDLATDVRFRDAPPADGGATPGGDA) form a disordered region.

The protein belongs to the TRAFAC class OBG-HflX-like GTPase superfamily. OBG GTPase family. In terms of assembly, monomer. Mg(2+) serves as cofactor.

The protein localises to the cytoplasm. In terms of biological role, an essential GTPase which binds GTP, GDP and possibly (p)ppGpp with moderate affinity, with high nucleotide exchange rates and a fairly low GTP hydrolysis rate. Plays a role in control of the cell cycle, stress response, ribosome biogenesis and in those bacteria that undergo differentiation, in morphogenesis control. The protein is GTPase Obg of Burkholderia ambifaria (strain MC40-6).